Consider the following 314-residue polypeptide: Elongator complex protein 5 (314 aa).

It belongs to the ELP5 family. Component of the elongator complex.

The protein localises to the cytoplasm. The protein resides in the nucleus. The protein operates within tRNA modification; 5-methoxycarbonylmethyl-2-thiouridine-tRNA biosynthesis. Its function is as follows. Component of the elongator complex, a multiprotein complex which is required for multiple tRNA modifications, including mcm5U (5-methoxycarbonylmethyl uridine), mcm5s2U (5-methoxycarbonylmethyl-2-thiouridine), and ncm5U (5-carbamoylmethyl uridine). The elongator complex catalyzes formation of carboxymethyluridine in the wobble base at position 34 in tRNAs. The polypeptide is Elongator complex protein 5 (iki1) (Schizosaccharomyces pombe (strain 972 / ATCC 24843) (Fission yeast)).